A 303-amino-acid polypeptide reads, in one-letter code: Sushi domain-containing protein 6 (303 aa).

Residues 1–39 form the signal peptide; that stretch reads MCHGRIAPKSTSVFAVASVGHGVFLPLVILCTLLGDGLA. Residues 40–104 form the Sushi domain; it reads SVCPLPPEPE…KPAMEISCRL (65 aa). Over 40-120 the chain is Extracellular; it reads SVCPLPPEPE…HTSLGVPTLS (81 aa). Intrachain disulfides connect cysteine 42–cysteine 89 and cysteine 74–cysteine 102. The helical transmembrane segment at 121–141 threads the bilayer; that stretch reads IVASTASSVALILLLVVLFVL. Residues 142–303 are Cytoplasmic-facing; that stretch reads LQPKLKSFHH…TDDIPLLKEA (162 aa). Disordered regions lie at residues 199 to 237 and 263 to 282; these read VLSE…GQSG and GSGN…NSDI.

It is found in the membrane. Its function is as follows. May play a role in growth-suppressive activity and cell death. May be involved in the production of chemokine molecules in umbilical vein endothelial cells (HUVECs) cultured in THP1 monocyte LPS-induced medium. Plays a role in preventing tumor onset. The polypeptide is Sushi domain-containing protein 6 (Homo sapiens (Human)).